A 304-amino-acid polypeptide reads, in one-letter code: MRWYEISIKTTEEAEDAISNILYELGANGVVIEDNEIVTRPNLWDYIDENQFTKKDYARVCAYFPESSNILELTHTIEERLKETAKYIDIGEGKISVSEVNEKDWAEEWKKYYKPVEIGNIVIVPSWEDYKAEGNKTIVKLDPGMAFGTGTHESTILCLEAIQKYVKPGMDVLDVGTGSGILAIAAKKFLARRVLAVDIDEVAVKVAEENARLNGVEIEIKKNDLVEGIEEKFDVVVANIVADIIMRLSRDVKKVLKDDRIFISSGIIEDRLEDVLKSFEKNSLEIVEVKKLGTWCLVVSKKTV.

S-adenosyl-L-methionine-binding residues include threonine 155, glycine 176, aspartate 198, and asparagine 239.

It belongs to the methyltransferase superfamily. PrmA family.

Its subcellular location is the cytoplasm. The enzyme catalyses L-lysyl-[protein] + 3 S-adenosyl-L-methionine = N(6),N(6),N(6)-trimethyl-L-lysyl-[protein] + 3 S-adenosyl-L-homocysteine + 3 H(+). Methylates ribosomal protein L11. The protein is Ribosomal protein L11 methyltransferase of Caldicellulosiruptor bescii (strain ATCC BAA-1888 / DSM 6725 / KCTC 15123 / Z-1320) (Anaerocellum thermophilum).